The following is a 303-amino-acid chain: D-alanine--D-alanine ligase (303 aa).

One can recognise an ATP-grasp domain in the interval 103-293; that stretch reads KTLFIKGGIP…FAQLCEKILE (191 aa). Residue 130 to 179 coordinates ATP; sequence PYVIKPSRQGSSIGIEFVYDIKELDQAIKKSTQYDHVVLAEALITGKELT. The Mg(2+) site is built by D247, E260, and N262.

Belongs to the D-alanine--D-alanine ligase family. Requires Mg(2+) as cofactor. The cofactor is Mn(2+).

Its subcellular location is the cytoplasm. The catalysed reaction is 2 D-alanine + ATP = D-alanyl-D-alanine + ADP + phosphate + H(+). Its pathway is cell wall biogenesis; peptidoglycan biosynthesis. Functionally, cell wall formation. The chain is D-alanine--D-alanine ligase from Methylacidiphilum infernorum (isolate V4) (Methylokorus infernorum (strain V4)).